Reading from the N-terminus, the 343-residue chain is C5a anaphylatoxin chemotactic receptor 2 (343 aa).

Residues 1-44 (MLNDTTSKDYEYEYDQEQYSDLLNVPVDCPAGNCFSNDAYLIVL) lie on the Extracellular side of the membrane. Residue N3 is glycosylated (N-linked (GlcNAc...) asparagine). Residues 45-67 (LGLYSVIFLVGVPGNTLLAWVTW) traverse the membrane as a helical segment. Topologically, residues 68–78 (KESRHRLGASW) are cytoplasmic. The chain crosses the membrane as a helical span at residues 79-101 (FLHLTMADLLCCVSLPFLAVPIA). The Extracellular segment spans residues 102 to 120 (QKGHWPYGTAGCWLLSSIT). A disulfide bridge connects residues C113 and C192. A helical transmembrane segment spans residues 121–143 (VLSMYASVLLLTGLSGDLFLLAF). Over 144 to 155 (RPSWKNADQRTC) the chain is Cytoplasmic. A helical transmembrane segment spans residues 156-178 (GVRVVQVSSWMLALLLTVPGAVY). Residues 179–208 (RKLLQEHYPPRLVCGTNYGGSVTAEVTITT) are Extracellular-facing. Residues 209–231 (VRFLFGFLVPLVFMASCHGILQR) form a helical membrane-spanning segment. At 232 to 243 (QMARRHWPLGTA) the chain is on the cytoplasmic side. The chain crosses the membrane as a helical span at residues 244-266 (VVVGFFICWTPFHLLRVIIAVAS). Over 267 to 280 (SHSPLLAWALEAEP) the chain is Extracellular. A helical membrane pass occupies residues 281 to 300 (LVTGLALAHSALNPIMFLYF). Over 301-343 (GRKQLCKSLQAACHWALRDLQDEEESAVTKVSTSQEMVSEMPV) the chain is Cytoplasmic. S326 carries the phosphoserine modification.

This sequence belongs to the G-protein coupled receptor 1 family. As to quaternary structure, interacts with C3 (the anaphylatoxin peptide C3a and the adipogenic hormone ASP); the interaction occurs with higher affinity for ASP, enhancing the phosphorylation and activation of GPR77, recruitment of ARRB2 to the cell surface and endocytosis of GRP77.

It is found in the cell membrane. Receptor for the chemotactic and inflammatory C3a, C4a and C5a anaphylatoxin peptides and also for their dearginated forms ASP/C3adesArg, C4adesArg and C5adesArg respectively. Couples weakly to G(i)-mediated signaling pathways. The protein is C5a anaphylatoxin chemotactic receptor 2 (C5ar2) of Rattus norvegicus (Rat).